Reading from the N-terminus, the 130-residue chain is Histone H2A.1 (130 aa).

The disordered stretch occupies residues 1-22 (MSGGKGKAGSSEKASTSRSAKA). N-acetylserine is present on S2. An N6-acetyllysine mark is found at K5 and K7. At Q105 the chain carries N5-methylglutamine. S127 is modified (phosphoserine). The [ST]-Q motif motif lies at 127–128 (SQ).

This sequence belongs to the histone H2A family. As to quaternary structure, the nucleosome is a histone octamer containing two molecules each of H2A, H2B, H3 and H4 assembled in one H3-H4 heterotetramer and two H2A-H2B heterodimers. The octamer wraps approximately 147 bp of DNA. Phosphorylated to form H2AS128ph (gamma-H2A) in response to DNA double-strand breaks (DSBs) generated by exogenous genotoxic agents and by stalled replication forks. Phosphorylation is dependent on the DNA damage checkpoint kinases MEC1/ATR and TEL1/ATM, spreads on either side of a detected DSB site and may mark the surrounding chromatin for recruitment of proteins required for DNA damage signaling and repair. Gamma-H2A is removed from the DNA prior to the strand invasion-primer extension step of the repair process and subsequently dephosphorylated. Dephosphorylation is necessary for efficient recovery from the DNA damage checkpoint. In terms of processing, acetylated by ESA1 to form H2AK4ac and H2AK7ac.

Its subcellular location is the nucleus. The protein localises to the chromosome. In terms of biological role, core component of nucleosome which plays a central role in DNA double strand break (DSB) repair. Nucleosomes wrap and compact DNA into chromatin, limiting DNA accessibility to the cellular machineries which require DNA as a template. Histones thereby play a central role in transcription regulation, DNA repair, DNA replication and chromosomal stability. DNA accessibility is regulated via a complex set of post-translational modifications of histones, also called histone code, and nucleosome remodeling. The sequence is that of Histone H2A.1 (HTA1) from Lodderomyces elongisporus (strain ATCC 11503 / CBS 2605 / JCM 1781 / NBRC 1676 / NRRL YB-4239) (Yeast).